Reading from the N-terminus, the 469-residue chain is UDP-N-acetylmuramate--L-alanine ligase (469 aa).

Position 112–118 (Gly112–Thr118) interacts with ATP.

The protein belongs to the MurCDEF family.

Its subcellular location is the cytoplasm. The enzyme catalyses UDP-N-acetyl-alpha-D-muramate + L-alanine + ATP = UDP-N-acetyl-alpha-D-muramoyl-L-alanine + ADP + phosphate + H(+). It participates in cell wall biogenesis; peptidoglycan biosynthesis. Its function is as follows. Cell wall formation. This Herminiimonas arsenicoxydans protein is UDP-N-acetylmuramate--L-alanine ligase.